The chain runs to 381 residues: F-box/LRR-repeat protein At4g14103 (381 aa).

The region spanning 7–60 (RDVISSLPDDISSHILSFLPTKEAASTSVLSKKWRYLFAFVPNLDLDDSVYLNP) is the F-box domain. LRR repeat units lie at residues 118–146 (DLHL…KLRF), 171–196 (HFEE…VLDD), 218–243 (SWQE…KFTD), 249–274 (YPKV…LINY), 299–330 (TLYL…TIES), and 331–356 (NPRV…IFQG).

The polypeptide is F-box/LRR-repeat protein At4g14103 (Arabidopsis thaliana (Mouse-ear cress)).